The primary structure comprises 277 residues: Inositol monophosphatase 1 (277 aa).

Positions 70, 90, 92, and 93 each coordinate Mg(2+). Glu70 is a binding site for substrate. A substrate-binding site is contributed by 92-95; it reads IDGT. The residue at position 168 (Thr168) is a Phosphothreonine. Substrate-binding positions include 194 to 196, Glu213, and Asp220; that span reads GTA. Asp220 provides a ligand contact to Mg(2+).

Belongs to the inositol monophosphatase superfamily. In terms of assembly, homodimer. Mg(2+) serves as cofactor.

Its subcellular location is the cytoplasm. It catalyses the reaction a myo-inositol phosphate + H2O = myo-inositol + phosphate. It carries out the reaction 1D-myo-inositol 1-phosphate + H2O = myo-inositol + phosphate. The enzyme catalyses 1D-myo-inositol 2-phosphate + H2O = myo-inositol + phosphate. The catalysed reaction is 1D-myo-inositol 3-phosphate + H2O = myo-inositol + phosphate. It catalyses the reaction 1D-myo-inositol 4-phosphate + H2O = myo-inositol + phosphate. It carries out the reaction 1D-myo-inositol 5-phosphate + H2O = myo-inositol + phosphate. The enzyme catalyses 1D-myo-inositol 6-phosphate + H2O = myo-inositol + phosphate. The catalysed reaction is scyllo-inositol 1-phosphate + H2O = scyllo-inositol + phosphate. It catalyses the reaction alpha-D-galactose 1-phosphate + H2O = D-galactose + phosphate. It carries out the reaction alpha-D-glucose 1-phosphate + H2O = D-glucose + phosphate. The enzyme catalyses D-glucose 6-phosphate + H2O = D-glucose + phosphate. The catalysed reaction is beta-D-fructose 1-phosphate + H2O = D-fructose + phosphate. It catalyses the reaction glycerol 2-phosphate + H2O = glycerol + phosphate. It carries out the reaction adenosine 2'-phosphate + H2O = adenosine + phosphate. Its pathway is polyol metabolism; myo-inositol biosynthesis; myo-inositol from D-glucose 6-phosphate: step 2/2. Its activity is regulated as follows. Activity with myo-inositol monophosphates and D-galactose 1-phosphate is inhibited by Li(+), Ca(2+) and Mn(2+), but also by Mg(2+) at concentrations above 3 mM. Phosphatase involved in the dephosphorylation of myo-inositol monophosphates to generate myo-inositol. Is also able to dephosphorylate scyllo-inositol-phosphate, myo-inositol 1,4-diphosphate, scyllo-inositol-1,3-diphosphate and scyllo-inositol-1,4-diphosphate. Also dephosphorylates in vitro other sugar-phosphates including D-galactose-1-phosphate, glucose-1-phosphate, glucose-6-phosphate, fructose-1-phosphate, beta-glycerophosphate and 2'-AMP. Responsible for the provision of inositol required for synthesis of phosphatidylinositols and polyphosphoinositides, and involved in maintaining normal brain function. Has been implicated as the pharmacological target for lithium (Li(+)) action in brain, which is used to treat bipolar affective disorder. Is equally active with 1D-myo-inositol 1-phosphate, 1D-myo-inositol 3-phosphate and D-galactose 1-phosphate. This chain is Inositol monophosphatase 1, found in Homo sapiens (Human).